The following is a 428-amino-acid chain: Glutamate-1-semialdehyde 2,1-aminomutase 2 (428 aa).

K267 bears the N6-(pyridoxal phosphate)lysine mark.

This sequence belongs to the class-III pyridoxal-phosphate-dependent aminotransferase family. HemL subfamily. In terms of assembly, homodimer. Pyridoxal 5'-phosphate serves as cofactor.

Its subcellular location is the cytoplasm. It catalyses the reaction (S)-4-amino-5-oxopentanoate = 5-aminolevulinate. It participates in porphyrin-containing compound metabolism; protoporphyrin-IX biosynthesis; 5-aminolevulinate from L-glutamyl-tRNA(Glu): step 2/2. The protein is Glutamate-1-semialdehyde 2,1-aminomutase 2 of Oceanobacillus iheyensis (strain DSM 14371 / CIP 107618 / JCM 11309 / KCTC 3954 / HTE831).